The sequence spans 86 residues: Exodeoxyribonuclease 7 small subunit (86 aa).

Belongs to the XseB family. As to quaternary structure, heterooligomer composed of large and small subunits.

The protein localises to the cytoplasm. The enzyme catalyses Exonucleolytic cleavage in either 5'- to 3'- or 3'- to 5'-direction to yield nucleoside 5'-phosphates.. Its function is as follows. Bidirectionally degrades single-stranded DNA into large acid-insoluble oligonucleotides, which are then degraded further into small acid-soluble oligonucleotides. The protein is Exodeoxyribonuclease 7 small subunit of Xanthomonas oryzae pv. oryzae (strain MAFF 311018).